Reading from the N-terminus, the 63-residue chain is UPF0337 protein RA1131 (63 aa).

Positions 1-63 (MGSAKDKVAG…DAVKGAVDKT (63 aa)) are disordered. Residues 34-49 (AKGAAQEAKGGAQQAK) are compositionally biased toward low complexity. A compositionally biased stretch (basic and acidic residues) spans 51-63 (KLKDAVKGAVDKT).

The protein belongs to the UPF0337 (CsbD) family.

The protein is UPF0337 protein RA1131 of Rhizobium meliloti (strain 1021) (Ensifer meliloti).